The following is a 268-amino-acid chain: Tropinone reductase homolog (268 aa).

21–45 is a binding site for NADP(+); that stretch reads LVTGGTRGIGYAIVEELANFGAEVY. Residue Ser154 coordinates substrate. The active-site Proton acceptor is Tyr167.

It belongs to the short-chain dehydrogenases/reductases (SDR) family.

This chain is Tropinone reductase homolog, found in Datura stramonium (Jimsonweed).